The chain runs to 224 residues: UPF0758 protein VCM66_0205 (224 aa).

The disordered stretch occupies residues methionine 1–glycine 20. Positions alanine 102–isoleucine 224 constitute an MPN domain. Residues histidine 173, histidine 175, and aspartate 186 each coordinate Zn(2+). A JAMM motif motif is present at residues histidine 173–aspartate 186.

Belongs to the UPF0758 family.

The protein is UPF0758 protein VCM66_0205 of Vibrio cholerae serotype O1 (strain M66-2).